A 572-amino-acid chain; its full sequence is Phosphoenolpyruvate-protein phosphotransferase (572 aa).

His191 functions as the Tele-phosphohistidine intermediate in the catalytic mechanism. Phosphoenolpyruvate-binding residues include Arg298 and Arg334. Mg(2+) contacts are provided by Glu433 and Asp457. Phosphoenolpyruvate-binding positions include 456-457 (ND) and Arg467. Cys504 functions as the Proton donor in the catalytic mechanism.

This sequence belongs to the PEP-utilizing enzyme family. Homodimer. Mg(2+) serves as cofactor.

The protein localises to the cytoplasm. It catalyses the reaction L-histidyl-[protein] + phosphoenolpyruvate = N(pros)-phospho-L-histidyl-[protein] + pyruvate. Its function is as follows. General (non sugar-specific) component of the phosphoenolpyruvate-dependent sugar phosphotransferase system (sugar PTS). This major carbohydrate active-transport system catalyzes the phosphorylation of incoming sugar substrates concomitantly with their translocation across the cell membrane. Enzyme I transfers the phosphoryl group from phosphoenolpyruvate (PEP) to the phosphoryl carrier protein (HPr). This Staphylococcus aureus (strain Mu50 / ATCC 700699) protein is Phosphoenolpyruvate-protein phosphotransferase (ptsI).